Consider the following 402-residue polypeptide: Multidrug resistance protein MdtH (402 aa).

Residues Met-1–Lys-12 lie on the Cytoplasmic side of the membrane. Residues Tyr-13–Ile-33 traverse the membrane as a helical segment. Over Ser-34–Glu-98 the chain is Periplasmic. A helical membrane pass occupies residues Pro-99–Phe-116. The Cytoplasmic segment spans residues Asp-117–Ser-138. Residues Leu-139 to Leu-159 traverse the membrane as a helical segment. Topologically, residues Gln-160 to Arg-164 are periplasmic. A helical membrane pass occupies residues Leu-165–Leu-185. Topologically, residues Pro-186–Tyr-213 are cytoplasmic. Residues Val-214–Met-234 traverse the membrane as a helical segment. At Val-235–Ser-243 the chain is on the periplasmic side. Residues Ala-244–Ala-264 traverse the membrane as a helical segment. The Cytoplasmic portion of the chain corresponds to Arg-265–Arg-276. The helical transmembrane segment at Leu-277 to Leu-297 threads the bilayer. Residues Gln-298–Gln-299 lie on the Periplasmic side of the membrane. Residues Leu-300 to Thr-320 traverse the membrane as a helical segment. Topologically, residues Leu-321 to Arg-339 are cytoplasmic. A helical membrane pass occupies residues Leu-340–Gly-360. Residues Lys-361–Glu-367 lie on the Periplasmic side of the membrane. The chain crosses the membrane as a helical span at residues Leu-368–Phe-388. Topologically, residues Ser-389 to Ala-402 are cytoplasmic.

The protein belongs to the major facilitator superfamily. DHA1 family. MdtH (TC 2.A.1.2.21) subfamily.

It is found in the cell inner membrane. In terms of biological role, confers resistance to norfloxacin and enoxacin. This is Multidrug resistance protein MdtH from Escherichia coli O157:H7.